The chain runs to 127 residues: Phosphoribosyl-AMP cyclohydrolase (127 aa).

Asp-83 is a Mg(2+) binding site. Residue Cys-84 participates in Zn(2+) binding. Mg(2+) contacts are provided by Asp-85 and Asp-87. Positions 100 and 107 each coordinate Zn(2+).

The protein belongs to the PRA-CH family. In terms of assembly, homodimer. Mg(2+) is required as a cofactor. It depends on Zn(2+) as a cofactor.

The protein resides in the cytoplasm. It catalyses the reaction 1-(5-phospho-beta-D-ribosyl)-5'-AMP + H2O = 1-(5-phospho-beta-D-ribosyl)-5-[(5-phospho-beta-D-ribosylamino)methylideneamino]imidazole-4-carboxamide. The protein operates within amino-acid biosynthesis; L-histidine biosynthesis; L-histidine from 5-phospho-alpha-D-ribose 1-diphosphate: step 3/9. Catalyzes the hydrolysis of the adenine ring of phosphoribosyl-AMP. The chain is Phosphoribosyl-AMP cyclohydrolase from Methanocaldococcus jannaschii (strain ATCC 43067 / DSM 2661 / JAL-1 / JCM 10045 / NBRC 100440) (Methanococcus jannaschii).